The primary structure comprises 683 residues: DNA-directed RNA polymerase subunit beta' (683 aa).

Zn(2+)-binding residues include cysteine 69, cysteine 71, cysteine 87, and cysteine 90. Positions 489, 491, and 493 each coordinate Mg(2+).

The protein belongs to the RNA polymerase beta' chain family. RpoC1 subfamily. In terms of assembly, in plastids the minimal PEP RNA polymerase catalytic core is composed of four subunits: alpha, beta, beta', and beta''. When a (nuclear-encoded) sigma factor is associated with the core the holoenzyme is formed, which can initiate transcription. Requires Mg(2+) as cofactor. It depends on Zn(2+) as a cofactor.

It is found in the plastid. It localises to the chloroplast. It catalyses the reaction RNA(n) + a ribonucleoside 5'-triphosphate = RNA(n+1) + diphosphate. Its function is as follows. DNA-dependent RNA polymerase catalyzes the transcription of DNA into RNA using the four ribonucleoside triphosphates as substrates. This chain is DNA-directed RNA polymerase subunit beta', found in Saccharum hybrid (Sugarcane).